The sequence spans 216 residues: Ribose-5-phosphate isomerase A (216 aa).

Substrate-binding positions include 26-29 (TGST), 79-82 (DGAD), and 92-95 (KGGG). The active-site Proton acceptor is E101. K119 contacts substrate.

Belongs to the ribose 5-phosphate isomerase family. As to quaternary structure, homodimer.

The catalysed reaction is aldehydo-D-ribose 5-phosphate = D-ribulose 5-phosphate. The protein operates within carbohydrate degradation; pentose phosphate pathway; D-ribose 5-phosphate from D-ribulose 5-phosphate (non-oxidative stage): step 1/1. Functionally, catalyzes the reversible conversion of ribose-5-phosphate to ribulose 5-phosphate. In Legionella pneumophila (strain Paris), this protein is Ribose-5-phosphate isomerase A.